The chain runs to 604 residues: MSEVIGIKHNQHIYDLCTADELGITGDSISFDNSQESLAIIRHSCAHLMAQAIKILYPEAQFFVGPVVDEGFYYDFKVNTKISEEDLLVIEAKMKEIAKNAYPITKITLSRKEAQARFAHDELKVAVMSRIPDEKLSIYTQGDFEDLCRGPHLPNTKLLEHFKLTKIAGAYLGGDENAQMLIRIYGIAFADKQSLKDYLFTLEEAKKRDHRKLGQEMGLFTFDEEIGAGLPIWLPKGARLRHNIEHLLTQALKERGYEPVRGPEILKSDVWKKSGHYSNYKENMYFTIIDEQEYGIKPMNCVGHIKVYQSSPRSYRELPLRFYEYGIVHRHERSGVLHGLLRVREFTQDDAHIFCMTSQIKSEVNQILDFTKGIMNAFGFHYEMELSTRPQKSIGNDEVWENATAALKSALEENHISYQIDEGGGAFYGPKIDIKITDALKRKWQCGTIQIDMNLPERFELSYTDEHNVQVQPVMIHRAILGSFERFVAILTEHFGGEFPLFIAPTQVILIPIGEAQLEYARILRDKIITQSGAYAELMDKNESLSKKIRLAEKQRVPLIVVIGAKEVESKILAIRDRREKSQYELPEEAFIATLKTKIGEVSF.

Positions 209–500 are catalytic; the sequence is DHRKLGQEMG…LTEHFGGEFP (292 aa). The Zn(2+) site is built by Cys-301, His-352, and His-477.

Belongs to the class-II aminoacyl-tRNA synthetase family. As to quaternary structure, homodimer. Zn(2+) serves as cofactor.

It is found in the cytoplasm. The catalysed reaction is tRNA(Thr) + L-threonine + ATP = L-threonyl-tRNA(Thr) + AMP + diphosphate + H(+). Catalyzes the attachment of threonine to tRNA(Thr) in a two-step reaction: L-threonine is first activated by ATP to form Thr-AMP and then transferred to the acceptor end of tRNA(Thr). Also edits incorrectly charged L-seryl-tRNA(Thr). In Helicobacter hepaticus (strain ATCC 51449 / 3B1), this protein is Threonine--tRNA ligase.